The sequence spans 121 residues: Large ribosomal subunit protein eL8 (121 aa).

It belongs to the eukaryotic ribosomal protein eL8 family. As to quaternary structure, part of the 50S ribosomal subunit. Probably part of the RNase P complex.

The protein resides in the cytoplasm. In terms of biological role, multifunctional RNA-binding protein that recognizes the K-turn motif in ribosomal RNA, the RNA component of RNase P, box H/ACA, box C/D and box C'/D' sRNAs. The polypeptide is Large ribosomal subunit protein eL8 (Thermoplasma acidophilum (strain ATCC 25905 / DSM 1728 / JCM 9062 / NBRC 15155 / AMRC-C165)).